We begin with the raw amino-acid sequence, 603 residues long: Prostaglandin G/H synthase 1 (603 aa).

The first 27 residues, 1-27 (MSRGSRLHRWPLLLLLLLLLPPPPVLP), serve as a signal peptide directing secretion. The EGF-like domain maps to 35–73 (PVNPCCYYPCQHQGICVRFGLDRYQCDCTRTGYSGPNCT). 4 disulfide bridges follow: Cys-39-Cys-50, Cys-40-Cys-162, Cys-44-Cys-60, and Cys-62-Cys-72. Asn-71, Asn-107, and Asn-147 each carry an N-linked (GlcNAc...) asparagine glycan. His-210 functions as the Proton acceptor in the catalytic mechanism. The active-site For cyclooxygenase activity is Tyr-388. His-391 lines the heme b pocket. A disulfide bridge links Cys-572 with Cys-578.

It belongs to the prostaglandin G/H synthase family. As to quaternary structure, homodimer. Requires heme b as cofactor. N-glycosylated. N-linked glycosylation is necessary for enzymatic activity. As to expression, brain cortex. Isoform 2 is expressed in the cerebral cortex and heart.

The protein resides in the microsome membrane. It is found in the endoplasmic reticulum membrane. The catalysed reaction is (5Z,8Z,11Z,14Z)-eicosatetraenoate + AH2 + 2 O2 = prostaglandin H2 + A + H2O. It catalyses the reaction (5Z,8Z,11Z,14Z)-eicosatetraenoate + 2 O2 = prostaglandin G2. It carries out the reaction prostaglandin G2 + AH2 = prostaglandin H2 + A + H2O. The enzyme catalyses (9Z,12Z)-octadecadienoate + AH2 + O2 = (9R)-hydroxy-(10E,12Z)-octadecadienoate + A + H2O. The catalysed reaction is (9Z,12Z)-octadecadienoate + AH2 + O2 = (9S)-hydroxy-(10E,12Z)-octadecadienoate + A + H2O. It catalyses the reaction (9Z,12Z)-octadecadienoate + AH2 + O2 = (13S)-hydroxy-(9Z,11E)-octadecadienoate + A + H2O. It carries out the reaction (9Z,12Z)-octadecadienoate + AH2 + O2 = (13R)-hydroxy-(9Z,11E)-octadecadienoate + A + H2O. The protein operates within lipid metabolism; prostaglandin biosynthesis. The cyclooxygenase activity is inhibited by nonsteroidal anti-inflammatory drugs (NSAIDs) including ibuprofen, flurbiprofen, ketoprofen, naproxen, flurbiprofen, anirolac, fenclofenac and diclofenac. Its function is as follows. Dual cyclooxygenase and peroxidase that plays an important role in the biosynthesis pathway of prostanoids, a class of C20 oxylipins mainly derived from arachidonate ((5Z,8Z,11Z,14Z)-eicosatetraenoate, AA, C20:4(n-6)), with a particular role in the inflammatory response. The cyclooxygenase activity oxygenates AA to the hydroperoxy endoperoxide prostaglandin G2 (PGG2), and the peroxidase activity reduces PGG2 to the hydroxy endoperoxide prostaglandin H2 (PGH2), the precursor of all 2-series prostaglandins and thromboxanes. This complex transformation is initiated by abstraction of hydrogen at carbon 13 (with S-stereochemistry), followed by insertion of molecular O2 to form the endoperoxide bridge between carbon 9 and 11 that defines prostaglandins. The insertion of a second molecule of O2 (bis-oxygenase activity) yields a hydroperoxy group in PGG2 that is then reduced to PGH2 by two electrons. Involved in the constitutive production of prostanoids in particular in the stomach and platelets. In gastric epithelial cells, it is a key step in the generation of prostaglandins, such as prostaglandin E2 (PGE2), which plays an important role in cytoprotection. In platelets, it is involved in the generation of thromboxane A2 (TXA2), which promotes platelet activation and aggregation, vasoconstriction and proliferation of vascular smooth muscle cells. Can also use linoleate (LA, (9Z,12Z)-octadecadienoate, C18:2(n-6)) as substrate and produce hydroxyoctadecadienoates (HODEs) in a regio- and stereospecific manner, being (9R)-HODE ((9R)-hydroxy-(10E,12Z)-octadecadienoate) and (13S)-HODE ((13S)-hydroxy-(9Z,11E)-octadecadienoate) its major products. The chain is Prostaglandin G/H synthase 1 (PTGS1) from Canis lupus familiaris (Dog).